A 773-amino-acid chain; its full sequence is Subtilisin-like protease SBT3.4 (773 aa).

A signal peptide spans 1-23 (MRNFRSSVLVVLSLIIVLNVARA). A propeptide spans 24-108 (SAKSKVHIVY…VIPDSYYELA (85 aa)) (activation peptide). Positions 29–108 (VHIVYLGEKQ…VIPDSYYELA (80 aa)) constitute an Inhibitor I9 domain. Residues 112 to 620 (IWDYLGPSAD…GGLVNPEKAA (509 aa)) enclose the Peptidase S8 domain. Catalysis depends on Asp142, which acts as the Charge relay system. Asn200 is a glycosylation site (N-linked (GlcNAc...) asparagine). The Charge relay system role is filled by His216. N-linked (GlcNAc...) asparagine glycosylation is found at Asn231, Asn408, and Asn536. Positions 382–474 (SLVYPEDPGN…IDNELGTDIL (93 aa)) constitute a PA domain. The active-site Charge relay system is the Ser551. N-linked (GlcNAc...) asparagine glycosylation is present at Asn643.

Belongs to the peptidase S8 family.

Its subcellular location is the secreted. The chain is Subtilisin-like protease SBT3.4 from Arabidopsis thaliana (Mouse-ear cress).